A 312-amino-acid chain; its full sequence is Fibrinogen-like protein 1 (312 aa).

Residues 1–22 (MAKMFSFILVTTALVMGRGSSA) form the signal peptide. Positions 39-60 (LLETRVKQQQVKISQLLHEKQV) form a coiled coil. Positions 74–306 (LGGKRQYADC…SVVMKIRPND (233 aa)) constitute a Fibrinogen C-terminal domain. Intrachain disulfides connect Cys-83/Cys-112 and Cys-248/Cys-261.

In terms of assembly, homodimer. Interacts (via the Fibrinogen C-terminal domain) with LAG3 (via Ig-like domains 1 and 2).

It localises to the secreted. Functionally, immune suppressive molecule that inhibits antigen-specific T-cell activation by acting as a major ligand of LAG3. Responsible for LAG3 T-cell inhibitory function. Binds LAG3 independently from MHC class II (MHC-II). Secreted by, and promotes growth of, hepatocytes. The chain is Fibrinogen-like protein 1 (FGL1) from Bos taurus (Bovine).